The primary structure comprises 100 residues: UPF0213 protein YhbQ (100 aa).

Residues 2–77 (TPWFLYLIRT…KQLTKRQKER (76 aa)) form the GIY-YIG domain.

Belongs to the UPF0213 family.

The chain is UPF0213 protein YhbQ from Escherichia coli O17:K52:H18 (strain UMN026 / ExPEC).